A 422-amino-acid chain; its full sequence is Serine hydroxymethyltransferase (422 aa).

(6S)-5,6,7,8-tetrahydrofolate-binding positions include L113 and 117–119; that span reads GHL. K222 bears the N6-(pyridoxal phosphate)lysine mark.

It belongs to the SHMT family. As to quaternary structure, homodimer. It depends on pyridoxal 5'-phosphate as a cofactor.

It localises to the cytoplasm. It catalyses the reaction (6R)-5,10-methylene-5,6,7,8-tetrahydrofolate + glycine + H2O = (6S)-5,6,7,8-tetrahydrofolate + L-serine. It functions in the pathway one-carbon metabolism; tetrahydrofolate interconversion. Its pathway is amino-acid biosynthesis; glycine biosynthesis; glycine from L-serine: step 1/1. Catalyzes the reversible interconversion of serine and glycine with tetrahydrofolate (THF) serving as the one-carbon carrier. This reaction serves as the major source of one-carbon groups required for the biosynthesis of purines, thymidylate, methionine, and other important biomolecules. Also exhibits THF-independent aldolase activity toward beta-hydroxyamino acids, producing glycine and aldehydes, via a retro-aldol mechanism. The polypeptide is Serine hydroxymethyltransferase (Amoebophilus asiaticus (strain 5a2)).